The chain runs to 380 residues: Cytochrome b (380 aa).

The next 4 membrane-spanning stretches (helical) occupy residues 34–54, 78–99, 114–134, and 179–199; these read FGSL…LLAA, WLIR…YLHI, WNTG…GYVL, and FFTL…IHLT. Histidine 84 and histidine 98 together coordinate heme b. 2 residues coordinate heme b: histidine 183 and histidine 197. Histidine 202 contributes to the a ubiquinone binding site. A run of 4 helical transmembrane segments spans residues 227–247, 289–309, 321–341, and 348–368; these read TKDI…ALFS, LGGV…PLLH, LSQL…WIGS, and FIII…ILFP.

Belongs to the cytochrome b family. As to quaternary structure, the cytochrome bc1 complex contains 11 subunits: 3 respiratory subunits (MT-CYB, CYC1 and UQCRFS1), 2 core proteins (UQCRC1 and UQCRC2) and 6 low-molecular weight proteins (UQCRH/QCR6, UQCRB/QCR7, UQCRQ/QCR8, UQCR10/QCR9, UQCR11/QCR10 and a cleavage product of UQCRFS1). This cytochrome bc1 complex then forms a dimer. It depends on heme b as a cofactor.

It localises to the mitochondrion inner membrane. Functionally, component of the ubiquinol-cytochrome c reductase complex (complex III or cytochrome b-c1 complex) that is part of the mitochondrial respiratory chain. The b-c1 complex mediates electron transfer from ubiquinol to cytochrome c. Contributes to the generation of a proton gradient across the mitochondrial membrane that is then used for ATP synthesis. In Eudyptes chrysocome (Western rockhopper penguin), this protein is Cytochrome b (MT-CYB).